The primary structure comprises 475 residues: PRAME family member 20 (475 aa).

Residues 97–124 form an LRR 1; degenerate repeat; it reads RWKLQVLDLQDVSENFWMVWSEAMARRC. One copy of the LRR 2; degenerate repeat lies at 179–203; sequence HLCCKKLKMLGMLFHNIRNILKTVN. One copy of the LRR 3; degenerate repeat lies at 204–230; that stretch reads LDCIQEVEVNCNWTLPVLAEFTPYLGQ. The LRR 4; degenerate repeat unit spans residues 231–265; sequence MRNLRKLVLSDIDSRYISPEQKKEFVTQFTTQFLK. LRR repeat units lie at residues 266–291, 292–323, 324–342, 348–375, and 376–400; these read LRCL…LSCL, KTSL…GQLK, TLDL…PLQV, AATL…ALSR, and CFEL…LLCH.

The protein belongs to the PRAME family.

This is PRAME family member 20 from Homo sapiens (Human).